The chain runs to 344 residues: Nicotinate-nucleotide--dimethylbenzimidazole phosphoribosyltransferase (344 aa).

Glu305 serves as the catalytic Proton acceptor.

It belongs to the CobT family.

The enzyme catalyses 5,6-dimethylbenzimidazole + nicotinate beta-D-ribonucleotide = alpha-ribazole 5'-phosphate + nicotinate + H(+). It participates in nucleoside biosynthesis; alpha-ribazole biosynthesis; alpha-ribazole from 5,6-dimethylbenzimidazole: step 1/2. Functionally, catalyzes the synthesis of alpha-ribazole-5'-phosphate from nicotinate mononucleotide (NAMN) and 5,6-dimethylbenzimidazole (DMB). The polypeptide is Nicotinate-nucleotide--dimethylbenzimidazole phosphoribosyltransferase (Agrobacterium fabrum (strain C58 / ATCC 33970) (Agrobacterium tumefaciens (strain C58))).